The chain runs to 829 residues: Leucine--tRNA ligase (829 aa).

The short motif at 40-50 is the 'HIGH' region element; the sequence is PYPSGNIHMGH. A 'KMSKS' region motif is present at residues 581-585; sequence KMSKS. Lys584 contributes to the ATP binding site.

It belongs to the class-I aminoacyl-tRNA synthetase family.

It is found in the cytoplasm. The enzyme catalyses tRNA(Leu) + L-leucine + ATP = L-leucyl-tRNA(Leu) + AMP + diphosphate. The polypeptide is Leucine--tRNA ligase (Oleidesulfovibrio alaskensis (strain ATCC BAA-1058 / DSM 17464 / G20) (Desulfovibrio alaskensis)).